The following is a 598-amino-acid chain: Protein VASCULAR ASSOCIATED DEATH 1, chloroplastic (598 aa).

Over residues 1–11 (MAMLSTASVSG) the composition is skewed to polar residues. The interval 1–64 (MAMLSTASVS…PSRGGDNQSE (64 aa)) is disordered. Residues 1-68 (MAMLSTASVS…GDNQSEVISK (68 aa)) constitute a chloroplast transit peptide. A glycan (N-linked (GlcNAc...) asparagine) is linked at asparagine 61. Positions 70–134 (EEYRQLFRLP…PFAEISCVKR (65 aa)) constitute a GRAM domain. One can recognise a VASt domain in the interval 272 to 444 (DFTKVAEAKF…MAHELLKQKK (173 aa)). 2 N-linked (GlcNAc...) asparagine glycosylation sites follow: asparagine 329 and asparagine 494. The chain crosses the membrane as a helical span at residues 507–527 (QVIVLAFAVILLMQVTIVVLL). Residues 553-595 (WLEKRMHFLREEMMMVEDRLQRMRQDHAALKAQFHHLERLLRR) are a coiled coil.

It localises to the membrane. The protein localises to the plastid. Its subcellular location is the chloroplast. Functionally, involved in ethylene- and salicylic acid-dependent cell death control associated with cells in the vicinity of vascular bundles. The polypeptide is Protein VASCULAR ASSOCIATED DEATH 1, chloroplastic (Arabidopsis thaliana (Mouse-ear cress)).